A 282-amino-acid chain; its full sequence is Heme oxygenase 1, chloroplastic (282 aa).

The N-terminal 56 residues, 1-56, are a transit peptide targeting the chloroplast; the sequence is MASATVVSQIQSLYIIKPRLSPPPPPHRQFRSIYFPTTRLLQQHRFRQMKSVVIVP. Histidine 86 provides a ligand contact to heme b.

Belongs to the heme oxygenase family. Highly expressed in root nodules and, to a lower extent, in leaves, shoots, roots, flowers and pods (at protein level).

The protein localises to the plastid. It localises to the chloroplast. The enzyme catalyses heme b + 3 reduced [NADPH--hemoprotein reductase] + 3 O2 = biliverdin IXalpha + CO + Fe(2+) + 3 oxidized [NADPH--hemoprotein reductase] + 3 H2O + H(+). Its function is as follows. Key enzyme in the synthesis of the chromophore of the phytochrome family of plant photoreceptors. Catalyzes the opening of the heme ring to form the open-chain tetrapyrrole biliverdin IX with the release of iron and carbon monoxide (CO). Produces specifically the biliverdin IX-alpha isomer. Can form complex with heme, is ferredoxin-dependent and its activity is increased in the presence of ascorbate. May affect the plastid-to-nucleus signaling pathway by perturbing tetrapyrrole synthesis. The plastid-to-nucleus signal plays an important role in the coordinated expression of both nuclear- and chloroplast-localized genes that encode photosynthesis-related proteins. Required for efficient symbiotic nitrogen fixation (SNF) in root nodules. Responsible for heme catabolism in uninfected nodule interstitial cells (UC), preventing superoxide production under stressful conditions (e.g. nitrate exposure and darkness) and catalyzing biliverdin (BV) production in senescing green nodules. This Lotus japonicus (Lotus corniculatus var. japonicus) protein is Heme oxygenase 1, chloroplastic.